Here is a 470-residue protein sequence, read N- to C-terminus: Glucose-1-phosphate adenylyltransferase (470 aa).

Residues Gly-165, 182–183 (EK), and Ser-200 each bind alpha-D-glucose 1-phosphate.

It belongs to the bacterial/plant glucose-1-phosphate adenylyltransferase family. As to quaternary structure, homotetramer.

The catalysed reaction is alpha-D-glucose 1-phosphate + ATP + H(+) = ADP-alpha-D-glucose + diphosphate. Its pathway is glycan biosynthesis; glycogen biosynthesis. Its function is as follows. Involved in the biosynthesis of ADP-glucose, a building block required for the elongation reactions to produce glycogen. Catalyzes the reaction between ATP and alpha-D-glucose 1-phosphate (G1P) to produce pyrophosphate and ADP-Glc. In Paenarthrobacter aurescens (strain TC1), this protein is Glucose-1-phosphate adenylyltransferase.